We begin with the raw amino-acid sequence, 922 residues long: Centrosomal protein of 104 kDa (922 aa).

Residues 210–277 adopt a coiled-coil conformation; sequence EVAQIIRRLD…DLAKEKKQQM (68 aa). Positions 307 to 318 are enriched in low complexity; sequence PLQPLASPSSPQ. Disordered stretches follow at residues 307–333 and 348–419; these read PLQPLASPSSPQHWKAVSSLPRTEELA and LASS…PLTE. The span at 396-407 shows a compositional bias: basic and acidic residues; it reads PEVREADSDVRR. HEAT repeat units lie at residues 526-564 and 601-637; these read AIPLLLARTGDSSARLRVMALNFIQEMALFKEVRSLQLI and GFTVDNVMKFAVSALEHRVYEVRETAVRIILDMYRQH. 2 stretches are compositionally biased toward basic and acidic residues: residues 673–697 and 714–725; these read TEAEGKTQKRVVTKEAEKQKKEETK and QEKENEAVKLKN. 2 disordered regions span residues 673 to 741 and 880 to 922; these read TEAE…TPEI and PAPQ…HTRR. A coiled-coil region spans residues 678 to 705; sequence KTQKRVVTKEAEKQKKEETKALQGLSAA.

In terms of assembly, interacts with CCP110 and CEP97. Interacts with ARMC9, TOGARAM1, CCDC66 and CSPP1. As to expression, expressed predominantly in the brain. Also detected, although at much lower levels, in the heart and the liver. Within the brain, expressed in the cerebral cortex, hippocampus, cerebellum and brainstem.

The protein localises to the cell projection. It localises to the cilium. Its subcellular location is the cytoplasm. The protein resides in the cytoskeleton. It is found in the microtubule organizing center. The protein localises to the centrosome. It localises to the centriole. Its subcellular location is the spindle pole. Functionally, required for ciliogenesis and for structural integrity at the ciliary tip. The sequence is that of Centrosomal protein of 104 kDa (Cep104) from Rattus norvegicus (Rat).